We begin with the raw amino-acid sequence, 218 residues long: Tubulin polymerization-promoting protein (218 aa).

Residues 1–46 form a disordered region; sequence MADSKAKPAKAANKTPPKSPGDPARAAKRLSLESEGANEGATAAPE. The segment at 1–115 is mediates interaction with LIMK1; the sequence is MADSKAKPAK…SCRTITFEQF (115 aa). Thr15 carries the post-translational modification Phosphothreonine. Ser19, Ser31, and Ser34 each carry phosphoserine. At Thr42 the chain carries Phosphothreonine. Residues His60, His71, Cys79, and Cys82 each coordinate Zn(2+). Thr91 carries the phosphothreonine modification. Residue Ser106 is modified to Phosphoserine. A glycan (O-linked (GlcNAc) serine) is linked at Ser151. 2 positions are modified to phosphoserine: Ser158 and Ser159. The disordered stretch occupies residues 166-192; sequence TDTSKFTGSHKERFDQSGKGKGKAGRV. Residues 174–183 show a composition bias toward basic and acidic residues; the sequence is SHKERFDQSG.

Belongs to the TPPP family. In terms of assembly, homodimer. Binds tubulin; binding is inhibited by GTP. Interacts with MAPK1. Interacts with GAPDH; the interaction is direct. Interacts with LIMK1 (via the PDZ domain); the interaction is direct. Interacts with LIMK2. Interacts with HDAC6; thereby inhibiting the tubulin deacetylase activity of HDAC6. Interacts with aggregated SNCA; may have a pro-aggregatory role in synucleinopathies. Interacts with DYNLL1. Interacts (via C-terminus) with S100A2, S100A6 and S100B; these interactions inhibit TPPP dimerization. The cofactor is Mg(2+). In terms of processing, phosphorylated by LIMK1 on serine residues; phosphorylation may alter the tubulin polymerization activity. Phosphorylation by LIMK2, but not LIMK1, regulates astral microtubule organization at early stage of mitosis. Phosphorylation by ROCK1 at Ser-31, Ser-106 and Ser-158 inhibits interaction with HDAC6, resulting in decreased acetylation of tubulin, increased cell motility and entry into S-phase. Phosphorylation by CDK1 inhibits the microtubule polymerizing activity. Post-translationally, degraded by the proteasome; zinc-binding inhibits degradation by the proteasome. Widely expressed with higher expression in brain (at protein level).

Its subcellular location is the golgi outpost. The protein localises to the cytoplasm. The protein resides in the cytoskeleton. It localises to the microtubule organizing center. It is found in the nucleus. Its subcellular location is the spindle. It catalyses the reaction GTP + H2O = GDP + phosphate + H(+). Functionally, regulator of microtubule dynamics that plays a key role in myelination by promoting elongation of the myelin sheath. Acts as a microtubule nucleation factor in oligodendrocytes: specifically localizes to the postsynaptic Golgi apparatus region, also named Golgi outpost, and promotes microtubule nucleation, an important step for elongation of the myelin sheath. Required for both uniform polarized growth of distal microtubules as well as directing the branching of proximal processes. Shows magnesium-dependent GTPase activity; the role of the GTPase activity is unclear. In addition to microtubule nucleation activity, also involved in microtubule bundling and stabilization of existing microtubules, thereby maintaining the integrity of the microtubule network. Regulates microtubule dynamics by promoting tubulin acetylation: acts by inhibiting the tubulin deacetylase activity of HDAC6. Also regulates cell migration: phosphorylation by ROCK1 inhibits interaction with HDAC6, resulting in decreased acetylation of tubulin and increased cell motility. Plays a role in cell proliferation by regulating the G1/S-phase transition. Involved in astral microtubule organization and mitotic spindle orientation during early stage of mitosis; this process is regulated by phosphorylation by LIMK2. The sequence is that of Tubulin polymerization-promoting protein from Mus musculus (Mouse).